Reading from the N-terminus, the 438-residue chain is GTPase Obg (438 aa).

The 159-residue stretch at 2-160 (SMFLDTAKIS…RELELELKIL (159 aa)) folds into the Obg domain. The interval 128-147 (NIRFATPRNPAPEIAENGEP) is disordered. The region spanning 161-338 (ADVGLVGFPS…LLDATANLLA (178 aa)) is the OBG-type G domain. GTP is bound by residues 167 to 174 (GFPSVGKS), 192 to 196 (FTTIV), 214 to 217 (DLPG), 284 to 287 (NKMD), and 319 to 321 (STL). Mg(2+)-binding residues include S174 and T194. One can recognise an OCT domain in the interval 360–438 (GFSEEEKAFE…IGNFEFEFVD (79 aa)).

It belongs to the TRAFAC class OBG-HflX-like GTPase superfamily. OBG GTPase family. As to quaternary structure, monomer. Requires Mg(2+) as cofactor.

Its subcellular location is the cytoplasm. An essential GTPase which binds GTP, GDP and possibly (p)ppGpp with moderate affinity, with high nucleotide exchange rates and a fairly low GTP hydrolysis rate. Plays a role in control of the cell cycle, stress response, ribosome biogenesis and in those bacteria that undergo differentiation, in morphogenesis control. The polypeptide is GTPase Obg (Streptococcus uberis (strain ATCC BAA-854 / 0140J)).